We begin with the raw amino-acid sequence, 161 residues long: RNA pyrophosphohydrolase (161 aa).

Positions 6 to 149 (GYRPNVGIIL…KKDVYRRALK (144 aa)) constitute a Nudix hydrolase domain. The short motif at 38-59 (GGIKSDETPEEALFRELKEEVG) is the Nudix box element.

Belongs to the Nudix hydrolase family. RppH subfamily. A divalent metal cation is required as a cofactor.

In terms of biological role, accelerates the degradation of transcripts by removing pyrophosphate from the 5'-end of triphosphorylated RNA, leading to a more labile monophosphorylated state that can stimulate subsequent ribonuclease cleavage. This Marinomonas sp. (strain MWYL1) protein is RNA pyrophosphohydrolase.